Consider the following 230-residue polypeptide: Orotidine 5'-phosphate decarboxylase (230 aa).

Substrate contacts are provided by residues Asp-11, Lys-34, 61–70 (DLKLHDIPNT), Thr-117, Arg-179, Gln-188, Gly-208, and Arg-209. The Proton donor role is filled by Lys-63.

This sequence belongs to the OMP decarboxylase family. Type 1 subfamily. As to quaternary structure, homodimer.

It catalyses the reaction orotidine 5'-phosphate + H(+) = UMP + CO2. It participates in pyrimidine metabolism; UMP biosynthesis via de novo pathway; UMP from orotate: step 2/2. Catalyzes the decarboxylation of orotidine 5'-monophosphate (OMP) to uridine 5'-monophosphate (UMP). This chain is Orotidine 5'-phosphate decarboxylase, found in Streptococcus pyogenes serotype M28 (strain MGAS6180).